Here is a 340-residue protein sequence, read N- to C-terminus: tRNA N6-adenosine threonylcarbamoyltransferase (340 aa).

Residues His111 and His115 each contribute to the Fe cation site. Substrate-binding positions include Leu134–Gly138, Asp167, Gly180, and Asn276. Asp304 is a Fe cation binding site.

Belongs to the KAE1 / TsaD family. It depends on Fe(2+) as a cofactor.

It is found in the cytoplasm. It catalyses the reaction L-threonylcarbamoyladenylate + adenosine(37) in tRNA = N(6)-L-threonylcarbamoyladenosine(37) in tRNA + AMP + H(+). Functionally, required for the formation of a threonylcarbamoyl group on adenosine at position 37 (t(6)A37) in tRNAs that read codons beginning with adenine. Is involved in the transfer of the threonylcarbamoyl moiety of threonylcarbamoyl-AMP (TC-AMP) to the N6 group of A37, together with TsaE and TsaB. TsaD likely plays a direct catalytic role in this reaction. The polypeptide is tRNA N6-adenosine threonylcarbamoyltransferase (Helicobacter pylori (strain P12)).